A 308-amino-acid polypeptide reads, in one-letter code: Porphobilinogen deaminase (308 aa).

Position 241 is an S-(dipyrrolylmethanemethyl)cysteine (Cys241).

Belongs to the HMBS family. As to quaternary structure, monomer. It depends on dipyrromethane as a cofactor.

The enzyme catalyses 4 porphobilinogen + H2O = hydroxymethylbilane + 4 NH4(+). It functions in the pathway porphyrin-containing compound metabolism; protoporphyrin-IX biosynthesis; coproporphyrinogen-III from 5-aminolevulinate: step 2/4. In terms of biological role, tetrapolymerization of the monopyrrole PBG into the hydroxymethylbilane pre-uroporphyrinogen in several discrete steps. The polypeptide is Porphobilinogen deaminase (Exiguobacterium sibiricum (strain DSM 17290 / CCUG 55495 / CIP 109462 / JCM 13490 / 255-15)).